The primary structure comprises 325 residues: Acetyl-coenzyme A carboxylase carboxyl transferase subunit alpha (325 aa).

One can recognise a CoA carboxyltransferase C-terminal domain in the interval 38 to 292; the sequence is RLEDRLAKLQ…DETLKQSLKT (255 aa).

The protein belongs to the AccA family. Acetyl-CoA carboxylase is a heterohexamer composed of biotin carboxyl carrier protein (AccB), biotin carboxylase (AccC) and two subunits each of ACCase subunit alpha (AccA) and ACCase subunit beta (AccD).

It localises to the cytoplasm. It carries out the reaction N(6)-carboxybiotinyl-L-lysyl-[protein] + acetyl-CoA = N(6)-biotinyl-L-lysyl-[protein] + malonyl-CoA. The protein operates within lipid metabolism; malonyl-CoA biosynthesis; malonyl-CoA from acetyl-CoA: step 1/1. With respect to regulation, inhibited by pyrrolidine dione antibiotics moiramide B (CPD1) and CPD2. In terms of biological role, component of the acetyl coenzyme A carboxylase (ACC) complex. First, biotin carboxylase catalyzes the carboxylation of biotin on its carrier protein (BCCP) and then the CO(2) group is transferred by the carboxyltransferase to acetyl-CoA to form malonyl-CoA. The chain is Acetyl-coenzyme A carboxylase carboxyl transferase subunit alpha from Bacillus subtilis (strain 168).